The sequence spans 67 residues: uncharacterized protein (67 aa).

This is an uncharacterized protein from Thermoproteus tenax virus 1 (strain KRA1) (TTV1).